Consider the following 389-residue polypeptide: MQGNALTVLLSGKKYLLLQGPMGPFFSDVAEWLESLGRNAVNVVFNGGDRFYCRHRQYLAYYQTPKEFPGWLRDLHRQYDFDTILCFGDCRPLHKEAKRWAKAKGIRFLAFEEGYLRPQFITVEEGGVNAYSSLPRDPDFYRKLPDMPTPHVENLKPSTMKRIGHAMWYYLMGWHYRHEFPRYRHHKSFSPWYEARCWVRAYWRKQLYKVTQRKVLPRLMNELDQRYYLAVLQVYNDSQIRNHSSYNDVRDYINEVMYSFSRKAPKESYLVIKHHPMDRGHRLYRPLIKRLSKEYGLGERILYVHDLPMPELLRHAKAVVTINSTAGISALIHNKPLKVMGNALYDIKGLTYQGHLHQFWQADFKPDMKLFKKFRGYLLVKTQVNAVYY.

The polypeptide is Capsule polysaccharide export protein KpsS (kpsS) (Escherichia coli).